A 386-amino-acid chain; its full sequence is Succinate--CoA ligase [ADP-forming] subunit beta (386 aa).

The ATP-grasp domain maps to 9–244 (KALLRAAGIK…TTQEDHRETQ (236 aa)). ATP is bound by residues Lys-46, 53 to 55 (GRG), Glu-100, and Arg-103. Residues Asn-199 and Asp-213 each contribute to the Mg(2+) site. Substrate-binding positions include Asn-264 and 321–323 (GIV).

It belongs to the succinate/malate CoA ligase beta subunit family. As to quaternary structure, heterotetramer of two alpha and two beta subunits. Mg(2+) serves as cofactor.

The enzyme catalyses succinate + ATP + CoA = succinyl-CoA + ADP + phosphate. It catalyses the reaction GTP + succinate + CoA = succinyl-CoA + GDP + phosphate. The protein operates within carbohydrate metabolism; tricarboxylic acid cycle; succinate from succinyl-CoA (ligase route): step 1/1. Its function is as follows. Succinyl-CoA synthetase functions in the citric acid cycle (TCA), coupling the hydrolysis of succinyl-CoA to the synthesis of either ATP or GTP and thus represents the only step of substrate-level phosphorylation in the TCA. The beta subunit provides nucleotide specificity of the enzyme and binds the substrate succinate, while the binding sites for coenzyme A and phosphate are found in the alpha subunit. This chain is Succinate--CoA ligase [ADP-forming] subunit beta, found in Dichelobacter nodosus (strain VCS1703A).